Consider the following 453-residue polypeptide: Ribosome biogenesis protein YTM1 (453 aa).

The segment at 8-89 (VKLRFFTREQ…ETFLNVEYTR (82 aa)) is ubiquitin-like (UBL) domain. Residues 99 to 453 (SFSNEDWVSS…INKGDNIFKS (355 aa)) form a sufficient for interaction with ERB1 and association with 66S pre-ribosomes region. WD repeat units follow at residues 101–139 (SNED…EKQY), 141–179 (GHSA…LKQP), 199–237 (GHKA…MTVV), 278–318 (SHTG…CIDT), 320–359 (TTSY…TSKI), 366–406 (GHKN…PMYT), and 417–453 (GVND…IFKS).

Belongs to the WD repeat WDR12/YTM1 family. In terms of assembly, component of the NOP7 complex, composed of ERB1, NOP7 and YTM1. The complex is held together by ERB1, which interacts with NOP7 via its N-terminal domain and with YTM1 via a high-affinity interaction between the seven-bladed beta-propeller domains of the 2 proteins. The NOP7 complex associates with the 66S pre-ribosome. Interacts (via UBL domain) with MDN1 (via VWFA/MIDAS domain).

It localises to the nucleus. The protein resides in the nucleolus. It is found in the nucleoplasm. Functionally, component of the NOP7 complex, which is required for maturation of the 25S and 5.8S ribosomal RNAs and formation of the 60S ribosome. The chain is Ribosome biogenesis protein YTM1 from Vanderwaltozyma polyspora (strain ATCC 22028 / DSM 70294 / BCRC 21397 / CBS 2163 / NBRC 10782 / NRRL Y-8283 / UCD 57-17) (Kluyveromyces polysporus).